The following is a 75-amino-acid chain: Large ribosomal subunit protein bL31 (75 aa).

It belongs to the bacterial ribosomal protein bL31 family. Type A subfamily. In terms of assembly, part of the 50S ribosomal subunit.

Functionally, binds the 23S rRNA. The protein is Large ribosomal subunit protein bL31 of Chlorobium phaeobacteroides (strain BS1).